A 292-amino-acid polypeptide reads, in one-letter code: Pantothenate synthetase (292 aa).

30 to 37 (MGFLHIGH) is an ATP binding site. H37 acts as the Proton donor in catalysis. Q61 is a binding site for (R)-pantoate. Q61 lines the beta-alanine pocket. Residue 147–150 (GEKD) participates in ATP binding. Q153 is a binding site for (R)-pantoate. Residues V176 and 184–187 (CSSR) each bind ATP.

It belongs to the pantothenate synthetase family. In terms of assembly, homodimer.

It is found in the cytoplasm. The enzyme catalyses (R)-pantoate + beta-alanine + ATP = (R)-pantothenate + AMP + diphosphate + H(+). Its pathway is cofactor biosynthesis; (R)-pantothenate biosynthesis; (R)-pantothenate from (R)-pantoate and beta-alanine: step 1/1. Functionally, catalyzes the condensation of pantoate with beta-alanine in an ATP-dependent reaction via a pantoyl-adenylate intermediate. This Agrobacterium fabrum (strain C58 / ATCC 33970) (Agrobacterium tumefaciens (strain C58)) protein is Pantothenate synthetase.